Here is a 312-residue protein sequence, read N- to C-terminus: Olfactory receptor 2L3 (312 aa).

Residues 1-24 (MENYNQTSTDFILLGFFPPSRIGL) lie on the Extracellular side of the membrane. Asparagine 5 is a glycosylation site (N-linked (GlcNAc...) asparagine). A helical transmembrane segment spans residues 25–48 (FLFILIVFIFLMALIGNLSMILLI). Residues 49–56 (FLDTHLHT) are Cytoplasmic-facing. The helical transmembrane segment at 57 to 78 (PMYFLLSQLSLIDLNYISTIVP) threads the bilayer. The Extracellular segment spans residues 79 to 99 (KMASDFLSGNKSISFTGCGIQ). An N-linked (GlcNAc...) asparagine glycan is attached at asparagine 88. A disulfide bridge connects residues cysteine 96 and cysteine 188. Residues 100–119 (SFFFSALGGAEALLLASMAY) form a helical membrane-spanning segment. Residues 120–138 (DRYIAICFPLHYPIRMSKR) lie on the Cytoplasmic side of the membrane. A helical transmembrane segment spans residues 139 to 157 (MCVLMITGSWIIGSINACA). The Extracellular segment spans residues 158–194 (HTVYVLHIPYCQSRAINHFFCDVPAMVTLACMDTWVY). The chain crosses the membrane as a helical span at residues 195-218 (EGTVFLSTTIFLVFPFIAISCSYG). Residues 219 to 235 (RVLLAVYHMKSAEGRKK) are Cytoplasmic-facing. Residues 236–258 (AYLTCSTHLTVVTFYYAPFVYTY) traverse the membrane as a helical segment. Topologically, residues 259 to 271 (LRPRSLRSPTEDK) are extracellular. A helical transmembrane segment spans residues 272 to 291 (VLAVFYTTLTPMLNPIIYSL). The Cytoplasmic portion of the chain corresponds to 292–312 (RNKEVMGALTRVSQRICSGKM).

Belongs to the G-protein coupled receptor 1 family.

It localises to the cell membrane. Odorant receptor. The chain is Olfactory receptor 2L3 (OR2L3) from Homo sapiens (Human).